Consider the following 569-residue polypeptide: Urease subunit alpha (569 aa).

Residues glycine 131 to leucine 569 form the Urease domain. The Ni(2+) site is built by histidine 136, histidine 138, and lysine 219. Lysine 219 carries the N6-carboxylysine modification. Histidine 221 serves as a coordination point for substrate. Positions 248 and 274 each coordinate Ni(2+). The active-site Proton donor is the histidine 322. Aspartate 362 is a Ni(2+) binding site.

This sequence belongs to the metallo-dependent hydrolases superfamily. Urease alpha subunit family. In terms of assembly, heterotrimer of UreA (gamma), UreB (beta) and UreC (alpha) subunits. Three heterotrimers associate to form the active enzyme. Ni cation serves as cofactor. Post-translationally, carboxylation allows a single lysine to coordinate two nickel ions.

It is found in the cytoplasm. The catalysed reaction is urea + 2 H2O + H(+) = hydrogencarbonate + 2 NH4(+). It participates in nitrogen metabolism; urea degradation; CO(2) and NH(3) from urea (urease route): step 1/1. In Parasynechococcus marenigrum (strain WH8102), this protein is Urease subunit alpha.